We begin with the raw amino-acid sequence, 207 residues long: dTTP/UTP pyrophosphatase (207 aa).

The active-site Proton acceptor is Asp79.

It belongs to the Maf family. YhdE subfamily. The cofactor is a divalent metal cation.

It is found in the cytoplasm. It catalyses the reaction dTTP + H2O = dTMP + diphosphate + H(+). The catalysed reaction is UTP + H2O = UMP + diphosphate + H(+). Nucleoside triphosphate pyrophosphatase that hydrolyzes dTTP and UTP. May have a dual role in cell division arrest and in preventing the incorporation of modified nucleotides into cellular nucleic acids. This chain is dTTP/UTP pyrophosphatase, found in Rhodopseudomonas palustris (strain BisB18).